Reading from the N-terminus, the 192-residue chain is Protein Syd (192 aa).

It belongs to the Syd family.

It is found in the cell inner membrane. Functionally, interacts with the SecY protein in vivo. May bind preferentially to an uncomplexed state of SecY, thus functioning either as a chelating agent for excess SecY in the cell or as a regulatory factor that negatively controls the translocase function. This is Protein Syd from Hahella chejuensis (strain KCTC 2396).